Consider the following 335-residue polypeptide: BTB and MATH domain-containing protein 39 (335 aa).

The 128-residue stretch at methionine 14–leucine 141 folds into the MATH domain. The region spanning alanine 161–valine 226 is the BTB domain.

The sequence is that of BTB and MATH domain-containing protein 39 from Caenorhabditis briggsae.